Here is a 350-residue protein sequence, read N- to C-terminus: Dihydroorotate dehydrogenase (quinone) (350 aa).

Residues 61 to 65 and T85 contribute to the FMN site; that span reads AGLDK. Substrate is bound at residue K65. 110 to 114 contacts substrate; it reads NRMGF. Positions 139 and 172 each coordinate FMN. Residue N172 participates in substrate binding. S175 (nucleophile) is an active-site residue. N177 contributes to the substrate binding site. Residues K217 and T245 each coordinate FMN. Residue 246 to 247 coordinates substrate; sequence NT. Residues G268, G297, and 318 to 319 contribute to the FMN site; that span reads YS.

This sequence belongs to the dihydroorotate dehydrogenase family. Type 2 subfamily. As to quaternary structure, monomer. Requires FMN as cofactor.

It localises to the cell membrane. It carries out the reaction (S)-dihydroorotate + a quinone = orotate + a quinol. It functions in the pathway pyrimidine metabolism; UMP biosynthesis via de novo pathway; orotate from (S)-dihydroorotate (quinone route): step 1/1. In terms of biological role, catalyzes the conversion of dihydroorotate to orotate with quinone as electron acceptor. The chain is Dihydroorotate dehydrogenase (quinone) from Flavobacterium lutescens.